Here is a 511-residue protein sequence, read N- to C-terminus: GMP synthase [glutamine-hydrolyzing] (511 aa).

One can recognise a Glutamine amidotransferase type-1 domain in the interval 3–198 (SVLVLDFGSQ…LLNIAAITPD (196 aa)). The Nucleophile role is filled by Cys-80. Catalysis depends on residues His-172 and Glu-174. In terms of domain architecture, GMPS ATP-PPase spans 199-386 (WSSKSFIEHQ…LGIPEDILMR (188 aa)). 226 to 232 (SGGVDST) provides a ligand contact to ATP.

In terms of assembly, homodimer.

It carries out the reaction XMP + L-glutamine + ATP + H2O = GMP + L-glutamate + AMP + diphosphate + 2 H(+). It participates in purine metabolism; GMP biosynthesis; GMP from XMP (L-Gln route): step 1/1. Functionally, catalyzes the synthesis of GMP from XMP. This is GMP synthase [glutamine-hydrolyzing] from Chlorobium chlorochromatii (strain CaD3).